We begin with the raw amino-acid sequence, 746 residues long: Polyribonucleotide nucleotidyltransferase (746 aa).

Mg(2+) is bound by residues D493 and D499. In terms of domain architecture, KH spans 560–619 (PRIITLQINPEKIGALIGPGGKTIRSITEATGAQIDIEEDGRVYISTADAAAAQQAVAMV). The S1 motif domain maps to 629-698 (GDIFLGKVVR…GTGKVSLSRR (70 aa)). The tract at residues 704-746 (ETAEDRRAAGAGRGLRDGGRSSGSERSGDRSPRSDDRPRPRRR) is disordered. Basic and acidic residues-rich tracts occupy residues 706 to 722 (AEDR…RDGG) and 729 to 746 (RSGD…PRRR).

The protein belongs to the polyribonucleotide nucleotidyltransferase family. It depends on Mg(2+) as a cofactor.

Its subcellular location is the cytoplasm. It carries out the reaction RNA(n+1) + phosphate = RNA(n) + a ribonucleoside 5'-diphosphate. In terms of biological role, involved in mRNA degradation. Catalyzes the phosphorolysis of single-stranded polyribonucleotides processively in the 3'- to 5'-direction. In Roseiflexus castenholzii (strain DSM 13941 / HLO8), this protein is Polyribonucleotide nucleotidyltransferase.